We begin with the raw amino-acid sequence, 214 residues long: 14-3-3 protein homolog 2 (214 aa).

Belongs to the 14-3-3 family.

The protein is 14-3-3 protein homolog 2 of Schistosoma mansoni (Blood fluke).